The sequence spans 277 residues: MSSKSQLTYTARASKHPNALAKRLFEIAEAKKTNVTVSADVTTTKELLDLADRLGPYIAVIKTHIDILSDFSDETIEGLKALAQKHIFLIFEDRKFIDIGNTVQKQYHRGTLRISEWAHIINCSILPGEGIVEALAQTASAPDFGYGPERGLLILAEMTSKGSLATGQYTTSSVDYARKSKNFVMGFVSTRPLGEVQSEVSSPSDEEDFVVFTTGVNISSKGDKLGQQYQTPASAIGRGADFIIAGRGIYAAPDPVQAAQQYQKEGWEAYLARVGGN.

Residues Asp-40, 62-64, 93-102, Tyr-229, and Arg-247 each bind substrate; these read KTH and DRKFIDIGNT. Lys-95 (proton donor) is an active-site residue.

This sequence belongs to the OMP decarboxylase family.

It catalyses the reaction orotidine 5'-phosphate + H(+) = UMP + CO2. The protein operates within pyrimidine metabolism; UMP biosynthesis via de novo pathway; UMP from orotate: step 2/2. This Aspergillus kawachii (White koji mold) protein is Orotidine 5'-phosphate decarboxylase (pyrG).